A 379-amino-acid chain; its full sequence is Homoserine O-succinyltransferase (379 aa).

Residues 51 to 360 (NAVLICHALS…DAPQGHDAFL (310 aa)) form the AB hydrolase-1 domain. The active-site Nucleophile is Ser157. Residue Arg227 participates in substrate binding. Active-site residues include Asp323 and His356. Residue Asp357 participates in substrate binding.

It belongs to the AB hydrolase superfamily. MetX family. Homodimer.

Its subcellular location is the cytoplasm. The enzyme catalyses L-homoserine + succinyl-CoA = O-succinyl-L-homoserine + CoA. It functions in the pathway amino-acid biosynthesis; L-methionine biosynthesis via de novo pathway; O-succinyl-L-homoserine from L-homoserine: step 1/1. Its activity is regulated as follows. Requires MetW for activity. Functionally, transfers a succinyl group from succinyl-CoA to L-homoserine, forming succinyl-L-homoserine. The polypeptide is Homoserine O-succinyltransferase (Pseudomonas syringae pv. syringae (strain B728a)).